Reading from the N-terminus, the 192-residue chain is Bifunctional protein PyrR (192 aa).

The PRPP-binding signature appears at 107–119; the sequence is VVLVDDVLFSGRT.

It belongs to the purine/pyrimidine phosphoribosyltransferase family. PyrR subfamily.

It catalyses the reaction UMP + diphosphate = 5-phospho-alpha-D-ribose 1-diphosphate + uracil. Its function is as follows. Regulates the transcription of the pyrimidine nucleotide (pyr) operon in response to exogenous pyrimidines. Functionally, also displays a weak uracil phosphoribosyltransferase activity which is not physiologically significant. This Corynebacterium efficiens (strain DSM 44549 / YS-314 / AJ 12310 / JCM 11189 / NBRC 100395) protein is Bifunctional protein PyrR.